We begin with the raw amino-acid sequence, 168 residues long: uncharacterized protein (168 aa).

A helical transmembrane segment spans residues 36–56 (LNWWQLIVVVGIAISGIAAIA). Asparagine 74 carries an N-linked (GlcNAc...) asparagine; by host glycan. 3 helical membrane-spanning segments follow: residues 86 to 106 (FIII…LAWL), 115 to 135 (KLLT…ALTI), and 143 to 163 (MVKL…GFFI). Asparagine 164 is a glycosylation site (N-linked (GlcNAc...) asparagine; by host).

Its subcellular location is the membrane. This is an uncharacterized protein from Acanthamoeba polyphaga mimivirus (APMV).